A 472-amino-acid chain; its full sequence is ATP synthase subunit beta (472 aa).

G156–T163 is an ATP binding site.

This sequence belongs to the ATPase alpha/beta chains family. As to quaternary structure, F-type ATPases have 2 components, CF(1) - the catalytic core - and CF(0) - the membrane proton channel. CF(1) has five subunits: alpha(3), beta(3), gamma(1), delta(1), epsilon(1). CF(0) has three main subunits: a(1), b(2) and c(9-12). The alpha and beta chains form an alternating ring which encloses part of the gamma chain. CF(1) is attached to CF(0) by a central stalk formed by the gamma and epsilon chains, while a peripheral stalk is formed by the delta and b chains.

The protein resides in the cell membrane. The catalysed reaction is ATP + H2O + 4 H(+)(in) = ADP + phosphate + 5 H(+)(out). Its function is as follows. Produces ATP from ADP in the presence of a proton gradient across the membrane. The catalytic sites are hosted primarily by the beta subunits. The polypeptide is ATP synthase subunit beta (Symbiobacterium thermophilum (strain DSM 24528 / JCM 14929 / IAM 14863 / T)).